The following is a 570-amino-acid chain: Phosphoglucomutase 1 (570 aa).

Ser-2 bears the N-acetylserine mark. 2 residues coordinate alpha-D-glucose 1,6-bisphosphate: Arg-24 and Ser-120. The active-site Phosphoserine intermediate is the Ser-120. Mg(2+)-binding residues include Ser-120, Asp-291, Asp-293, and Asp-295. A Phosphoserine modification is found at Ser-120. Alpha-D-glucose 1,6-bisphosphate contacts are provided by Asp-295, Arg-296, Thr-360, Glu-379, Ser-381, and Lys-392.

Belongs to the phosphohexose mutase family. As to quaternary structure, monomer. It depends on Mg(2+) as a cofactor.

It localises to the cytoplasm. It catalyses the reaction alpha-D-glucose 1-phosphate = alpha-D-glucose 6-phosphate. The enzyme catalyses O-phospho-L-seryl-[protein] + alpha-D-glucose 1-phosphate = alpha-D-glucose 1,6-bisphosphate + L-seryl-[protein]. The catalysed reaction is alpha-D-glucose 1,6-bisphosphate + L-seryl-[protein] = O-phospho-L-seryl-[protein] + alpha-D-glucose 6-phosphate. In terms of biological role, minor phosphoglucomutase isozyme that catalyzes the reversible interconversion of alpha-D-glucose 1-phosphate and alpha-D-glucose 6-phosphate. The mechanism proceeds via the intermediate compound alpha-D-glucose 1,6-bisphosphate. Constitutes about 10-20% of the phosphoglucomutase activity in the cell. Key enzyme in hexose metabolism. The forward reaction is an essential step in the energy metabolism of galactose since the product of the galactose pathway enzymes in yeast is glucose 1-phosphate. The reverse reaction is an essential step for biosynthesis when carbon sources other than galactose are the energy source because glucose 1-phosphate is the starting point for the synthesis of UDP-glucose, which acts as a precursor for the synthesis of oligosaccharides and trehalose. This Saccharomyces cerevisiae (strain ATCC 204508 / S288c) (Baker's yeast) protein is Phosphoglucomutase 1.